Here is a 485-residue protein sequence, read N- to C-terminus: Aspartyl/glutamyl-tRNA(Asn/Gln) amidotransferase subunit B (485 aa).

It belongs to the GatB/GatE family. GatB subfamily. Heterotrimer of A, B and C subunits.

The enzyme catalyses L-glutamyl-tRNA(Gln) + L-glutamine + ATP + H2O = L-glutaminyl-tRNA(Gln) + L-glutamate + ADP + phosphate + H(+). It catalyses the reaction L-aspartyl-tRNA(Asn) + L-glutamine + ATP + H2O = L-asparaginyl-tRNA(Asn) + L-glutamate + ADP + phosphate + 2 H(+). In terms of biological role, allows the formation of correctly charged Asn-tRNA(Asn) or Gln-tRNA(Gln) through the transamidation of misacylated Asp-tRNA(Asn) or Glu-tRNA(Gln) in organisms which lack either or both of asparaginyl-tRNA or glutaminyl-tRNA synthetases. The reaction takes place in the presence of glutamine and ATP through an activated phospho-Asp-tRNA(Asn) or phospho-Glu-tRNA(Gln). The chain is Aspartyl/glutamyl-tRNA(Asn/Gln) amidotransferase subunit B from Anaplasma marginale (strain St. Maries).